A 549-amino-acid polypeptide reads, in one-letter code: Glucose-6-phosphate isomerase (549 aa).

Residue Glu-355 is the Proton donor of the active site. Active-site residues include His-386 and Lys-514.

This sequence belongs to the GPI family.

It localises to the cytoplasm. It catalyses the reaction alpha-D-glucose 6-phosphate = beta-D-fructose 6-phosphate. Its pathway is carbohydrate biosynthesis; gluconeogenesis. The protein operates within carbohydrate degradation; glycolysis; D-glyceraldehyde 3-phosphate and glycerone phosphate from D-glucose: step 2/4. Its function is as follows. Catalyzes the reversible isomerization of glucose-6-phosphate to fructose-6-phosphate. The sequence is that of Glucose-6-phosphate isomerase from Aeromonas salmonicida (strain A449).